The following is an 831-amino-acid chain: Periplasmic nitrate reductase (831 aa).

The tat-type signal signal peptide spans 1 to 38; sequence MSMARRDFIKQTAAAAAATVAGVPLTGYTQNIVTESEA. Residues 41 to 97 enclose the 4Fe-4S Mo/W bis-MGD-type domain; that stretch reads LKWSKAPCRFCGTGCGVNVAVKDNQVVATHGDFNAEVNKGLNCVKGYFLSKIMYGSD. Positions 48, 51, 55, and 83 each coordinate [4Fe-4S] cluster. Residues K85, Q152, N177, C181, 214–221, 245–249, 264–266, M375, Q379, N485, 511–512, K534, D561, and 721–730 each bind Mo-bis(molybdopterin guanine dinucleotide); these read WGSNMAEM, STFEH, QSD, SD, and TGRVLEHWHS. W797 serves as a coordination point for substrate. N805 and K822 together coordinate Mo-bis(molybdopterin guanine dinucleotide).

Belongs to the prokaryotic molybdopterin-containing oxidoreductase family. NasA/NapA/NarB subfamily. In terms of assembly, component of the periplasmic nitrate reductase NapAB complex composed of NapA and NapB. Requires [4Fe-4S] cluster as cofactor. Mo-bis(molybdopterin guanine dinucleotide) is required as a cofactor. Predicted to be exported by the Tat system. The position of the signal peptide cleavage has not been experimentally proven.

Its subcellular location is the periplasm. It carries out the reaction 2 Fe(II)-[cytochrome] + nitrate + 2 H(+) = 2 Fe(III)-[cytochrome] + nitrite + H2O. Functionally, catalytic subunit of the periplasmic nitrate reductase complex NapAB. Receives electrons from NapB and catalyzes the reduction of nitrate to nitrite. In Bordetella parapertussis (strain 12822 / ATCC BAA-587 / NCTC 13253), this protein is Periplasmic nitrate reductase.